Consider the following 107-residue polypeptide: Transcriptional regulator Rv3488 (107 aa).

Residues H16, E30, H34, and H101 each coordinate Cd(2+).

In terms of assembly, homodimer.

In terms of biological role, may have transcription regulation and metal-detoxifying functions through which it may enhance intracellular survival of mycobacteria. Binds to its own promoter region and to the Rv1999c promoter region. It displays strong affinity for cadmium ions, but can also bind zinc, manganese and nickel. Expression increases the intracellular survival of recombinant M.smegmatis in murine macrophage cell line and increases its tolerance to cadmium ions. This chain is Transcriptional regulator Rv3488, found in Mycobacterium tuberculosis (strain ATCC 25618 / H37Rv).